A 405-amino-acid polypeptide reads, in one-letter code: MIVMTNSAAPHLLPVFARSDLGFERGEGCWLIATNGDRYLDFTSGVAVNALGHAHPALVKALQEQATKLWHMSNLFQSPDGEKLATRLCNESFADFVFFCNSGAEALEGVIKLVRHHHFSKGHPERYRIITFEGAFHGRTLATLAATGSAKYLEGFGPPMDGFDQVPHGDIEAVKKAIGPQTAGILIEPIQGEGGVRSATPAFLKALRQLCDEKGLLLAFDEVQTGMGRTGDLFAHRRTGVTPDVMSLAKALGGGFPIGAILATADAAAGMGPGSHGSTFGGNPLAIAAANAVLDVMLKPGFFDHVQKMSLLLKQKLASVIDRHGDVVSEVRGEGLLIGIKAVVPSGDLVAALRNEKLLTVGAGDNVVRFLPPLIVTEAEIEDSVGRLERACAAISSSQTKRAAS.

Pyridoxal 5'-phosphate is bound by residues 103–104 (GA) and F136. Residue R139 coordinates N(2)-acetyl-L-ornithine. A pyridoxal 5'-phosphate-binding site is contributed by 221–224 (DEVQ). K250 is subject to N6-(pyridoxal phosphate)lysine. Residue S278 coordinates N(2)-acetyl-L-ornithine. T279 contacts pyridoxal 5'-phosphate.

The protein belongs to the class-III pyridoxal-phosphate-dependent aminotransferase family. ArgD subfamily. Homodimer. Pyridoxal 5'-phosphate is required as a cofactor.

It is found in the cytoplasm. It catalyses the reaction N(2)-acetyl-L-ornithine + 2-oxoglutarate = N-acetyl-L-glutamate 5-semialdehyde + L-glutamate. The protein operates within amino-acid biosynthesis; L-arginine biosynthesis; N(2)-acetyl-L-ornithine from L-glutamate: step 4/4. The chain is Acetylornithine aminotransferase 1 from Bradyrhizobium diazoefficiens (strain JCM 10833 / BCRC 13528 / IAM 13628 / NBRC 14792 / USDA 110).